The primary structure comprises 33 residues: Cytochrome b6-f complex subunit 8 (33 aa).

Residues 2–22 form a helical membrane-spanning segment; the sequence is LFTLAWASLAAVFSFSIAMVV.

Belongs to the PetN family. As to quaternary structure, the 4 large subunits of the cytochrome b6-f complex are cytochrome b6, subunit IV (17 kDa polypeptide, PetD), cytochrome f and the Rieske protein, while the 4 small subunits are PetG, PetL, PetM and PetN. The complex functions as a dimer.

The protein resides in the cellular thylakoid membrane. Functionally, component of the cytochrome b6-f complex, which mediates electron transfer between photosystem II (PSII) and photosystem I (PSI), cyclic electron flow around PSI, and state transitions. This chain is Cytochrome b6-f complex subunit 8, found in Synechococcus sp. (strain WH7803).